The sequence spans 401 residues: Probable acid ceramidase (401 aa).

Positions 1 to 22 (MKPVAISLSLLLLVTLLPGSEQ) are cleaved as a signal peptide. N-linked (GlcNAc...) asparagine glycosylation is found at Asn-101, Asn-303, and Asn-371.

This sequence belongs to the acid ceramidase family.

The catalysed reaction is an N-acyl-sphingoid base + H2O = a sphingoid base + a fatty acid. The enzyme catalyses an N-acylsphing-4-enine + H2O = sphing-4-enine + a fatty acid. It catalyses the reaction an N-acyl-15-methylhexadecasphing-4-enine + H2O = 15-methylhexadecasphing-4-enine + a fatty acid. Its function is as follows. Catalyzes the hydrolysis of ceramides into sphingoid base and free fatty acid. C.elegans contain specific sphingoid bases, which are unique or different in structure compared to the sphingoid bases found in other animals. Two examples of these distinctive compounds are: 15-methylhexadecasphinganine and 15-methylhexadecasphing-4-enine. The protein is Probable acid ceramidase of Caenorhabditis elegans.